The primary structure comprises 302 residues: Recombination-associated protein RdgC (302 aa).

Belongs to the RdgC family.

The protein resides in the cytoplasm. It localises to the nucleoid. Its function is as follows. May be involved in recombination. This Psychromonas ingrahamii (strain DSM 17664 / CCUG 51855 / 37) protein is Recombination-associated protein RdgC.